Here is a 289-residue protein sequence, read N- to C-terminus: Bidirectional sugar transporter SWEET11 (289 aa).

The Extracellular portion of the chain corresponds to 1 to 9 (MSLFNTENT). A helical membrane pass occupies residues 10 to 30 (WAFVFGLLGNLISFAVFLSPV). Positions 12–98 (FVFGLLGNLI…SMFLAYAPKP (87 aa)) constitute a MtN3/slv 1 domain. Over 31-43 (PTFYRIWKKKTTE) the chain is Cytoplasmic. A helical membrane pass occupies residues 44-64 (GFQSIPYVVALFSATLWLYYA). Topologically, residues 65–70 (TQKKDV) are extracellular. A helical membrane pass occupies residues 71–91 (FLLVTINAFGCFIETIYISMF). Over 92–105 (LAYAPKPARMLTVK) the chain is Cytoplasmic. A helical transmembrane segment spans residues 106-126 (MLLLMNFGGFCAILLLCQFLV). The Extracellular portion of the chain corresponds to 127–133 (KGATRAK). A helical transmembrane segment spans residues 134–154 (IIGGICVGFSVCVFAAPLSII). Residues 134–218 (IIGGICVGFS…ILYVVYKYCK (85 aa)) enclose the MtN3/slv 2 domain. Residues 155–167 (RTVIKTRSVEYMP) are Cytoplasmic-facing. The helical transmembrane segment at 168–188 (FSLSLTLTISAVIWLLYGLAL) threads the bilayer. At 189 to 192 (KDIY) the chain is on the extracellular side. A helical transmembrane segment spans residues 193-213 (VAFPNVLGFALGALQMILYVV). Residues 214 to 289 (YKYCKTSPHL…GKQSSSAAAT (76 aa)) are Cytoplasmic-facing. The segment at 266–289 (DRRAEIEDGQTPKHGKQSSSAAAT) is disordered. Thr-276 is modified (phosphothreonine).

The protein belongs to the SWEET sugar transporter family. Forms homooligomers and heterooligomers with SWEET1, SWEET3, SWEET5, SWEET6, SWEET7, SWEET8, SWEET9, SWEET12, SWEET13, SWEET15 and SWEET17. Expressed in leaves, especially in phloem. Expressed in developing seeds.

The protein resides in the cell membrane. Functionally, mediates both low-affinity uptake and efflux of sugar across the plasma membrane. Involved in phloem loading by mediating export from parenchyma cells feeding H(+)-coupled import into the sieve element/companion cell complex, thus contributing to the sucrose migration from sites of synthesis in the mesophyll to the phloem. Contributes to seed filling by triggering sucrose efflux involved in the transfer of sugars from seed coat to embryos. The chain is Bidirectional sugar transporter SWEET11 from Arabidopsis thaliana (Mouse-ear cress).